Consider the following 183-residue polypeptide: Ras-like protein (183 aa).

10-17 is a GTP binding site; the sequence is GAGGVGKS. Positions 32–40 match the Effector region motif; sequence YDPTIEDSY. Residues 57-61 and 116-119 each bind GTP; these read DTAGQ and NKCD.

This sequence belongs to the small GTPase superfamily. Ras family.

Its subcellular location is the cell membrane. It catalyses the reaction GTP + H2O = GDP + phosphate + H(+). Alternates between an inactive form bound to GDP and an active form bound to GTP. Activated by a guanine nucleotide-exchange factor (GEF) and inactivated by a GTPase-activating protein (GAP). Functionally, ras proteins bind GDP/GTP and possess intrinsic GTPase activity. This is Ras-like protein from Carassius auratus (Goldfish).